The primary structure comprises 78 residues: Acyl carrier protein (78 aa).

The 76-residue stretch at 2 to 77 folds into the Carrier domain; the sequence is SNIEQQVKKI…LAIDYINAHN (76 aa). S37 is subject to O-(pantetheine 4'-phosphoryl)serine.

It belongs to the acyl carrier protein (ACP) family. 4'-phosphopantetheine is transferred from CoA to a specific serine of apo-ACP by AcpS. This modification is essential for activity because fatty acids are bound in thioester linkage to the sulfhydryl of the prosthetic group.

The protein localises to the cytoplasm. Its pathway is lipid metabolism; fatty acid biosynthesis. Its function is as follows. Carrier of the growing fatty acid chain in fatty acid biosynthesis. This is Acyl carrier protein from Neisseria meningitidis serogroup C / serotype 2a (strain ATCC 700532 / DSM 15464 / FAM18).